Reading from the N-terminus, the 142-residue chain is Acidic phospholipase A2 KBf-grIB (142 aa).

7 disulfide bridges follow: cysteine 28–cysteine 94, cysteine 44–cysteine 141, cysteine 46–cysteine 62, cysteine 61–cysteine 122, cysteine 68–cysteine 115, cysteine 78–cysteine 108, and cysteine 101–cysteine 113. Ca(2+) is bound by residues tyrosine 45, glycine 47, and glycine 49. Histidine 65 is a catalytic residue. Aspartate 66 provides a ligand contact to Ca(2+). The active site involves aspartate 116.

The protein belongs to the phospholipase A2 family. Group I subfamily. D49 sub-subfamily. Ca(2+) is required as a cofactor. As to expression, expressed by the venom gland.

The protein resides in the secreted. It carries out the reaction a 1,2-diacyl-sn-glycero-3-phosphocholine + H2O = a 1-acyl-sn-glycero-3-phosphocholine + a fatty acid + H(+). Its function is as follows. PLA2 catalyzes the calcium-dependent hydrolysis of the 2-acyl groups in 3-sn-phosphoglycerides. This chain is Acidic phospholipase A2 KBf-grIB, found in Bungarus fasciatus (Banded krait).